The chain runs to 156 residues: Ribonuclease H (156 aa).

One can recognise an RNase H type-1 domain in the interval 1-142 (MGKQVEIFTD…CDELARAAAN (142 aa)). Residues D10, E48, D70, and D134 each contribute to the Mg(2+) site.

It belongs to the RNase H family. In terms of assembly, monomer. Mg(2+) is required as a cofactor.

Its subcellular location is the cytoplasm. The catalysed reaction is Endonucleolytic cleavage to 5'-phosphomonoester.. Functionally, endonuclease that specifically degrades the RNA of RNA-DNA hybrids. This chain is Ribonuclease H, found in Photorhabdus luminescens (Xenorhabdus luminescens).